We begin with the raw amino-acid sequence, 165 residues long: Transcription factor TCP16 (165 aa).

Over residues 1–11 (MDSKNGINNSQ) the composition is skewed to polar residues. Disordered stretches follow at residues 1–21 (MDSK…KDRH) and 146–165 (GNAT…TTTV). A compositionally biased stretch (basic residues) spans 12–21 (KARRTPKDRH). The region spanning 17–71 (PKDRHLKIGGRDRRIRIPPSVAPQLFRLTKELGFKTDGETVSWLLQNAEPAIFAA) is the TCP domain. The segment covering 148-165 (ATASDTTSAATTTATTTV) has biased composition (low complexity).

As to expression, mostly in anther in young buds.

The protein localises to the nucleus. Its function is as follows. Required during early processes in pollen development. In Arabidopsis thaliana (Mouse-ear cress), this protein is Transcription factor TCP16 (TCP16).